Consider the following 795-residue polypeptide: Nucleolar complex protein 3 homolog (795 aa).

Disordered regions lie at residues 1 to 88 (MKPM…PLDM), 124 to 144 (RDDV…EPEK), and 168 to 190 (IPSE…EVPE). Basic and acidic residues-rich tracts occupy residues 22-39 (LKLD…ESSA) and 46-58 (QKQL…DVRS). Acidic residues predominate over residues 74–88 (EEEYEVEEESLPLDM). The segment covering 171 to 181 (EEQEENEEEMD) has biased composition (acidic residues). A coiled-coil region spans residues 447–492 (SYKDKKKNLSRMQRKWKKAEEKLERELLEAEASESKEKKLKLNTET).

It belongs to the CBF/MAK21 family.

It is found in the nucleus. Its subcellular location is the nucleolus. In Xenopus laevis (African clawed frog), this protein is Nucleolar complex protein 3 homolog (noc3l).